Consider the following 281-residue polypeptide: MEILHSISDVKKYIKQWKKEGLTIGLVPTMGYLHDGHKSLIERASKENDKVIVSDFVNPIQFGPNEDLDVYPRDLDRDAEVCTKAGASILFNPEPSEMYFDDAVTFVNSSKITDILCGARRPGHFRGVCTVVTKLFNITCPDRAYFGEKDAQQVAVIKRMVRDLNFDIEIVACPIIREEDGLAKSSRNSYLSSEERKAATILSKSLNLAKELLDNGEKNVYNIKKAIIIEIGKEPLAKIDYVEVVDSLSLKSVSKVQQSILVAIAVYIGKIRLIDNFTWNI.

30–37 contacts ATP; that stretch reads MGYLHDGH. Histidine 37 functions as the Proton donor in the catalytic mechanism. Glutamine 61 is a (R)-pantoate binding site. Position 61 (glutamine 61) interacts with beta-alanine. Position 147–150 (147–150) interacts with ATP; that stretch reads GEKD. Position 153 (glutamine 153) interacts with (R)-pantoate. ATP is bound by residues isoleucine 176 and 184–187; that span reads KSSR.

Belongs to the pantothenate synthetase family. As to quaternary structure, homodimer.

The protein localises to the cytoplasm. The enzyme catalyses (R)-pantoate + beta-alanine + ATP = (R)-pantothenate + AMP + diphosphate + H(+). It functions in the pathway cofactor biosynthesis; (R)-pantothenate biosynthesis; (R)-pantothenate from (R)-pantoate and beta-alanine: step 1/1. Its function is as follows. Catalyzes the condensation of pantoate with beta-alanine in an ATP-dependent reaction via a pantoyl-adenylate intermediate. The polypeptide is Pantothenate synthetase (Clostridium acetobutylicum (strain ATCC 824 / DSM 792 / JCM 1419 / IAM 19013 / LMG 5710 / NBRC 13948 / NRRL B-527 / VKM B-1787 / 2291 / W)).